Here is a 177-residue protein sequence, read N- to C-terminus: Large ribosomal subunit protein uL6 (177 aa).

The protein belongs to the universal ribosomal protein uL6 family. As to quaternary structure, part of the 50S ribosomal subunit.

In terms of biological role, this protein binds to the 23S rRNA, and is important in its secondary structure. It is located near the subunit interface in the base of the L7/L12 stalk, and near the tRNA binding site of the peptidyltransferase center. This Rickettsia canadensis (strain McKiel) protein is Large ribosomal subunit protein uL6.